We begin with the raw amino-acid sequence, 303 residues long: D-alanine--D-alanine ligase (303 aa).

Residues 104-300 form the ATP-grasp domain; it reads KLLWNAVGLP…FERLVERVLE (197 aa). Residue 132–187 participates in ATP binding; it reads IAKLGLPLFVKPASEGSSVGVSKVKTAEQLLPAIEEALKYDSIVLVEENLAGAEYS. Positions 254, 267, and 269 each coordinate Mg(2+).

It belongs to the D-alanine--D-alanine ligase family. Mg(2+) serves as cofactor. The cofactor is Mn(2+).

The protein resides in the cytoplasm. It carries out the reaction 2 D-alanine + ATP = D-alanyl-D-alanine + ADP + phosphate + H(+). It functions in the pathway cell wall biogenesis; peptidoglycan biosynthesis. In terms of biological role, cell wall formation. In Glaesserella parasuis serovar 5 (strain SH0165) (Haemophilus parasuis), this protein is D-alanine--D-alanine ligase.